Here is a 253-residue protein sequence, read N- to C-terminus: MKKVLIAGGNGVIGRLLAEGLISDYEVTVLDKDHFDGKASSIQADAANYEELLKKIPKDTDAILNLLAVKIKYDIMDIAEFEKMTDVFYRASYYLCRAAAELGIQKLVFASSNHVTDVYEKDGRSLLGREITTSDYPLSKNLYGVLKLTSEQIGHLFYLENKLSVINLRIGTVVTDEMDTLHEKERTKKTLLSHPDLLSIFKAAIETNIRYGTYYAVSDNPGRPWSIESAVNELGFSPQINTAELLNEEENGA.

It belongs to the NAD(P)-dependent epimerase/dehydratase family.

This is an uncharacterized protein from Bacillus subtilis (strain 168).